Here is a 334-residue protein sequence, read N- to C-terminus: Ornithine carbamoyltransferase (334 aa).

Residues 57 to 60, Gln-84, Arg-108, and 135 to 138 contribute to the carbamoyl phosphate site; these read STRT and HPTQ. Residues Asn-169, Asp-233, and 237–238 each bind L-ornithine; that span reads SM. Carbamoyl phosphate contacts are provided by residues 275–276 and Arg-320; that span reads CL.

The protein belongs to the aspartate/ornithine carbamoyltransferase superfamily. OTCase family.

The protein localises to the cytoplasm. It carries out the reaction carbamoyl phosphate + L-ornithine = L-citrulline + phosphate + H(+). The protein operates within amino-acid biosynthesis; L-arginine biosynthesis; L-arginine from L-ornithine and carbamoyl phosphate: step 1/3. Functionally, reversibly catalyzes the transfer of the carbamoyl group from carbamoyl phosphate (CP) to the N(epsilon) atom of ornithine (ORN) to produce L-citrulline. The sequence is that of Ornithine carbamoyltransferase from Aliivibrio fischeri (strain ATCC 700601 / ES114) (Vibrio fischeri).